The following is a 398-amino-acid chain: Lysophospholipid transporter LplT (398 aa).

A run of 12 helical transmembrane segments spans residues 19–39, 53–73, 96–116, 139–159, 164–184, 195–213, 227–247, 257–277, 281–301, 304–324, 352–372, and 373–393; these read VIVA…ATLA, VLQM…GQIA, ICLG…AAAY, LMEA…GVLA, IAAL…NLFI, SWQL…VVLW, LFWG…PVAL, YLNA…AKLV, TVSR…MFSL, ALLP…FFVV, NSTM…GVPA, and VATG…LWIW.

It belongs to the major facilitator superfamily. LplT (TC 2.A.1.42) family.

The protein resides in the cell inner membrane. Catalyzes the facilitated diffusion of 2-acyl-glycero-3-phosphoethanolamine (2-acyl-GPE) into the cell. The chain is Lysophospholipid transporter LplT from Salmonella arizonae (strain ATCC BAA-731 / CDC346-86 / RSK2980).